Here is a 227-residue protein sequence, read N- to C-terminus: MAKGVFITATNTDIGKTYITALIVKKLREANINCGYYKAALSGAEIINNNIVAGDAKYVYNVANIKGNPNECVSYIFKQAVSPHLAAKLNNVHISMDKIVADFNYRCNEHDYITVEGSGGIICPIYYDKEKIMLTDIIKKLKIPIILVSPSGLGSINGTILTLEYIKKHNLVVNSIILNNYDKSNIIHIDNKRILEEMTNLPVYTCEQYSEDIDIPLKELKQFYDFI.

ATP is bound at residue 13 to 18; it reads DIGKTY. Residue Thr17 participates in Mg(2+) binding. Lys38 is a catalytic residue. Residue Ser42 coordinates substrate. Residues Asp55, 116–119, and 179–180 contribute to the ATP site; these read EGSG and NN. Positions 55 and 116 each coordinate Mg(2+).

It belongs to the dethiobiotin synthetase family. In terms of assembly, homodimer. Mg(2+) is required as a cofactor.

Its subcellular location is the cytoplasm. It catalyses the reaction (7R,8S)-7,8-diammoniononanoate + CO2 + ATP = (4R,5S)-dethiobiotin + ADP + phosphate + 3 H(+). It functions in the pathway cofactor biosynthesis; biotin biosynthesis; biotin from 7,8-diaminononanoate: step 1/2. In terms of biological role, catalyzes a mechanistically unusual reaction, the ATP-dependent insertion of CO2 between the N7 and N8 nitrogen atoms of 7,8-diaminopelargonic acid (DAPA, also called 7,8-diammoniononanoate) to form a ureido ring. The protein is ATP-dependent dethiobiotin synthetase BioD of Clostridium botulinum (strain Eklund 17B / Type B).